The following is a 271-amino-acid chain: Glutamate racemase 3 (271 aa).

Residues 15 to 16 and 47 to 48 contribute to the substrate site; these read DS and YG. C78 acts as the Proton donor/acceptor in catalysis. Position 79 to 80 (79 to 80) interacts with substrate; that stretch reads NT. C185 (proton donor/acceptor) is an active-site residue. A substrate-binding site is contributed by 186–187; it reads TH.

This sequence belongs to the aspartate/glutamate racemases family.

The enzyme catalyses L-glutamate = D-glutamate. It participates in cell wall biogenesis; peptidoglycan biosynthesis. Functionally, provides the (R)-glutamate required for cell wall biosynthesis. In Caldanaerobacter subterraneus subsp. tengcongensis (strain DSM 15242 / JCM 11007 / NBRC 100824 / MB4) (Thermoanaerobacter tengcongensis), this protein is Glutamate racemase 3.